The following is a 730-amino-acid chain: Catalase-peroxidase (730 aa).

A cross-link (tryptophyl-tyrosyl-methioninium (Trp-Tyr) (with M-244)) is located at residues W95 to Y218. H96 functions as the Proton acceptor in the catalytic mechanism. Residues Y218 to M244 constitute a cross-link (tryptophyl-tyrosyl-methioninium (Tyr-Met) (with W-95)). Residue H259 participates in heme b binding.

The protein belongs to the peroxidase family. Peroxidase/catalase subfamily. In terms of assembly, homodimer or homotetramer. The cofactor is heme b. Post-translationally, formation of the three residue Trp-Tyr-Met cross-link is important for the catalase, but not the peroxidase activity of the enzyme.

The enzyme catalyses H2O2 + AH2 = A + 2 H2O. It carries out the reaction 2 H2O2 = O2 + 2 H2O. Functionally, bifunctional enzyme with both catalase and broad-spectrum peroxidase activity. In Clostridium botulinum (strain Eklund 17B / Type B), this protein is Catalase-peroxidase.